The sequence spans 63 residues: Large ribosomal subunit protein bL28 (63 aa).

Belongs to the bacterial ribosomal protein bL28 family.

This Brachyspira hyodysenteriae (strain ATCC 49526 / WA1) protein is Large ribosomal subunit protein bL28.